The primary structure comprises 295 residues: Probable alpha-L-glutamate ligase 1 (295 aa).

The ATP-grasp domain maps to 104–287 (MQLLSRKGIG…VANAIIEFIE (184 aa)). ATP contacts are provided by residues Lys-141, 178 to 179 (EY), Asp-187, and 211 to 213 (RSN). Residues Asp-248, Glu-260, and Asn-262 each coordinate Mg(2+). Mn(2+) is bound by residues Asp-248, Glu-260, and Asn-262.

It belongs to the RimK family. The cofactor is Mg(2+). Mn(2+) is required as a cofactor.

The sequence is that of Probable alpha-L-glutamate ligase 1 from Shewanella denitrificans (strain OS217 / ATCC BAA-1090 / DSM 15013).